The chain runs to 679 residues: Stress-70 protein, mitochondrial (679 aa).

Residues 1–46 (MISASRAAAARLVGTAASRSPAAARPQDGWNGLSHEAFRFVSRRDY) constitute a mitochondrion transit peptide. The segment at 1-432 (MISASRAAAA…IQGGVLAGDV (432 aa)) is interaction with NFS1. Residues threonine 63 and asparagine 64 each coordinate ADP. The nucleotide-binding domain (NBD) stretch occupies residues 63 to 431 (TNSCVAVMEG…AIQGGVLAGD (369 aa)). Lysine 76 carries the N6-acetyllysine modification. Phosphothreonine is present on threonine 87. N6-acetyllysine; alternate occurs at positions 135 and 138. N6-succinyllysine; alternate occurs at positions 135 and 138. Residue lysine 143 is modified to N6-acetyllysine. Lysine 206 bears the N6-acetyllysine; alternate mark. Position 206 is an N6-succinyllysine; alternate (lysine 206). Residue lysine 206 is modified to N6-malonyllysine; alternate. Lysine 234 and lysine 288 each carry N6-acetyllysine. Position 300 is an N6-acetyllysine; alternate (lysine 300). Lysine 300 bears the N6-succinyllysine; alternate mark. ADP is bound by residues glutamate 313, lysine 316, and serine 320. Lysine 360 bears the N6-acetyllysine; alternate mark. Lysine 360 is modified (N6-succinyllysine; alternate). Lysine 368 carries the N6-succinyllysine modification. 2 residues coordinate ADP: glycine 388 and arginine 391. The residue at position 394 (lysine 394) is an N6-succinyllysine. Serine 408 is subject to Phosphoserine. The interdomain linker stretch occupies residues 432-441 (VTDVLLLDVT). Residues 432–679 (VTDVLLLDVT…QKEDQKEEKQ (248 aa)) are interaction with FXN and ISCU. Residues 442-679 (PLSLGIETLG…QKEDQKEEKQ (238 aa)) are substrate-binding domain (SBD). Arginine 513 carries the post-translational modification Omega-N-methylarginine. N6-acetyllysine; alternate occurs at positions 567 and 600. Residues lysine 567 and lysine 600 each carry the N6-succinyllysine; alternate modification. Lysine 610 is modified (N6-succinyllysine). Position 612 is an N6-acetyllysine (lysine 612). Lysine 646 is modified (N6-acetyllysine; alternate). Residue lysine 646 is modified to N6-succinyllysine; alternate. Positions 656–679 (ASEREGSGSSGTGEQKEDQKEEKQ) are disordered. The span at 669–679 (EQKEDQKEEKQ) shows a compositional bias: basic and acidic residues.

Belongs to the heat shock protein 70 family. Interacts strongly with the intermediate form of FXN and weakly with its mature form. Interacts with HSCB. Associates with the mitochondrial contact site and cristae organizing system (MICOS) complex, composed of at least MICOS10/MIC10, CHCHD3/MIC19, CHCHD6/MIC25, APOOL/MIC27, IMMT/MIC60, APOO/MIC23/MIC26 and QIL1/MIC13. This complex was also known under the names MINOS or MitOS complex. The MICOS complex associates with mitochondrial outer membrane proteins SAMM50, MTX1, MTX2 and DNAJC11, mitochondrial inner membrane protein TMEM11 and with HSPA9. Interacts with DNLZ, the interaction is required to prevent self-aggregation. Interacts with TESPA1. Interacts with PDPN. Interacts with NFU1, NFS1 and ISCU. Interacts with TP53; the interaction promotes TP53 degradation. Interacts (via SBD domain) with UBXN2A; the interaction with UBXN2A inhibits HSPA9/MOT-2 interaction with and degradation of TP53, thereby promotes TP53 translocation to the nucleus. Interacts with ITPR1 AND VDAC1; this interaction couples ITPR1 to VDAC1. Component of the TIM23 mitochondrial inner membrane pre-sequence translocase complex.

The protein localises to the mitochondrion. It localises to the nucleus. It is found in the nucleolus. Its subcellular location is the cytoplasm. The protein resides in the mitochondrion matrix. It carries out the reaction ATP + H2O = ADP + phosphate + H(+). With respect to regulation, the chaperone activity is regulated by ATP-induced allosteric coupling of the nucleotide-binding (NBD) and substrate-binding (SBD) domains. ATP binding in the NBD leads to a conformational change in the NBD, which is transferred through the interdomain linker (IDL) to the substrate-binding domain (SBD). This elicits a reduced substrate affinity and a faster substrate exchange rate. Upon hydrolysis of ATP to ADP, the protein undergoes a conformational change that increases its affinity for substrate proteins. It cycles through repeated phases of ATP hydrolysis and nucleotide exchange, facilitating repeated cycles of substrate binding and release. Functions in collaboration with co-chaperones. Functions with the co-chaperone, DNLZ, to maintain solubility and regulate ATP hydrolysis. Nucleotide exchange factors, GRPEL1 and GRPEL2, accelerate nucleotide exchange. Mitochondrial chaperone that plays a key role in mitochondrial protein import, folding, and assembly. Plays an essential role in the protein quality control system, the correct folding of proteins, the re-folding of misfolded proteins, and the targeting of proteins for subsequent degradation. These processes are achieved through cycles of ATP binding, ATP hydrolysis, and ADP release, mediated by co-chaperones. In mitochondria, it associates with the TIM (translocase of the inner membrane) protein complex to assist in the import and folding of mitochondrial proteins. Plays an important role in mitochondrial iron-sulfur cluster (ISC) biogenesis. Interacts with and stabilizes ISC cluster assembly proteins FXN, NFU1, NFS1 and ISCU. Regulates erythropoiesis via stabilization of ISC assembly. Regulates mitochondrial calcium-dependent apoptosis by coupling two calcium channels, ITPR1 and VDAC1, at the mitochondria-associated endoplasmic reticulum (ER) membrane to facilitate calcium transport from the ER lumen to the mitochondria intermembrane space, providing calcium for the downstream calcium channel MCU, which releases it into the mitochondrial matrix. Although primarily located in the mitochondria, it is also found in other cellular compartments. In the cytosol, it associates with proteins involved in signaling, apoptosis, or senescence. It may play a role in cell cycle regulation via its interaction with and promotion of degradation of TP53. May play a role in the control of cell proliferation and cellular aging. Protects against reactive oxygen species (ROS). Extracellular HSPA9 plays a cytoprotective role by preventing cell lysis following immune attack by the membrane attack complex by disrupting formation of the complex. The sequence is that of Stress-70 protein, mitochondrial from Mus musculus (Mouse).